The following is a 308-amino-acid chain: Probable peptidyl-prolyl cis-trans isomerase B (308 aa).

The interval 74–123 is disordered; it reads DHQSTTSATPTDSASTSPPQAATAPPLPPFKPSANLGANCQYPPSPDKAV. Over residues 77 to 97 the composition is skewed to low complexity; that stretch reads STTSATPTDSASTSPPQAATA. Positions 139–307 constitute a PPIase cyclophilin-type domain; sequence AQVSVSMVTN…TEVTITSVLL (169 aa).

It belongs to the cyclophilin-type PPIase family.

The catalysed reaction is [protein]-peptidylproline (omega=180) = [protein]-peptidylproline (omega=0). Functionally, PPIases accelerate the folding of proteins. It catalyzes the cis-trans isomerization of proline imidic peptide bonds in oligopeptides. In Mycobacterium tuberculosis (strain CDC 1551 / Oshkosh), this protein is Probable peptidyl-prolyl cis-trans isomerase B (ppiB).